Reading from the N-terminus, the 210-residue chain is MTFTIAIDGPAAAGKGTLSRKIAETYGFHHLDTGLTYRATAKALLDAGLPLDNEAVAEKMALELDLAGLDRAVLSRHEIGEAASKIAVMTPVRRALVKAQKLFAMREPGTVLDGRDIGTVVCPDAPVKLYVTASADVRARRRYDEILANGGNGDYDAIFAEVKKRDERDMGRADSPLRPAEDAHLLDTSEMSIEAAFQAARTIIDAALKR.

Position 9–17 (9–17 (GPAAAGKGT)) interacts with ATP.

This sequence belongs to the cytidylate kinase family. Type 1 subfamily.

The protein localises to the cytoplasm. The enzyme catalyses CMP + ATP = CDP + ADP. It carries out the reaction dCMP + ATP = dCDP + ADP. The protein is Cytidylate kinase of Agrobacterium fabrum (strain C58 / ATCC 33970) (Agrobacterium tumefaciens (strain C58)).